A 339-amino-acid polypeptide reads, in one-letter code: Ectoine/5-hydroxyectoine-binding periplasmic protein UehA (339 aa).

Positions 1-20 (MAQSITFTFGAVAAAGIALA) are cleaved as a signal peptide. Residues E36, R171, N211, F215, and F236 each coordinate L-ectoine. C162 and C303 are disulfide-bonded.

Belongs to the bacterial solute-binding protein 7 family. Monomer. The complex comprises the extracytoplasmic solute receptor protein UehA, and the two transmembrane proteins UehB and UehC.

It localises to the periplasm. Its function is as follows. Part of the tripartite ATP-independent periplasmic (TRAP) transport system UehABC, which imports both ectoine and 5-hydroxyectoine as nutrients, and not as osmoprotectants. UehA binds both ectoine and 5-hydroxyectoine with high specificity and affinity. The sequence is that of Ectoine/5-hydroxyectoine-binding periplasmic protein UehA from Ruegeria pomeroyi (strain ATCC 700808 / DSM 15171 / DSS-3) (Silicibacter pomeroyi).